A 149-amino-acid polypeptide reads, in one-letter code: Transcriptional repressor NrdR (149 aa).

The segment at 3 to 34 (CPYCSYEESKVVDSRSAEDYNAIRRRRECLRC) is a zinc-finger region. The ATP-cone domain maps to 49-139 (ILVIKKDLSR…VYRQFKDINT (91 aa)).

This sequence belongs to the NrdR family. The cofactor is Zn(2+).

Its function is as follows. Negatively regulates transcription of bacterial ribonucleotide reductase nrd genes and operons by binding to NrdR-boxes. The chain is Transcriptional repressor NrdR from Clostridium perfringens (strain SM101 / Type A).